The following is a 235-amino-acid chain: Uridylate kinase (235 aa).

Residue 9 to 12 (KLSG) participates in ATP binding. The interval 17–22 (GKDGYG) is involved in allosteric activation by GTP. Glycine 51 contributes to the UMP binding site. ATP contacts are provided by glycine 52 and arginine 56. Residues aspartate 71 and 132–139 (TGNPYFTT) each bind UMP. The ATP site is built by threonine 159, tyrosine 165, and aspartate 168.

Belongs to the UMP kinase family. In terms of assembly, homohexamer.

It is found in the cytoplasm. It carries out the reaction UMP + ATP = UDP + ADP. Its pathway is pyrimidine metabolism; CTP biosynthesis via de novo pathway; UDP from UMP (UMPK route): step 1/1. Allosterically activated by GTP. Inhibited by UTP. Functionally, catalyzes the reversible phosphorylation of UMP to UDP. The protein is Uridylate kinase of Chlorobium luteolum (strain DSM 273 / BCRC 81028 / 2530) (Pelodictyon luteolum).